A 300-amino-acid polypeptide reads, in one-letter code: tRNA dimethylallyltransferase (300 aa).

An ATP-binding site is contributed by 9 to 16; sequence GTTASGKS. 11–16 provides a ligand contact to substrate; the sequence is TASGKS. An interaction with substrate tRNA region spans residues 34 to 37; the sequence is DSLC.

It belongs to the IPP transferase family. In terms of assembly, monomer. Mg(2+) is required as a cofactor.

It carries out the reaction adenosine(37) in tRNA + dimethylallyl diphosphate = N(6)-dimethylallyladenosine(37) in tRNA + diphosphate. Catalyzes the transfer of a dimethylallyl group onto the adenine at position 37 in tRNAs that read codons beginning with uridine, leading to the formation of N6-(dimethylallyl)adenosine (i(6)A). The polypeptide is tRNA dimethylallyltransferase (Campylobacter fetus subsp. fetus (strain 82-40)).